Consider the following 291-residue polypeptide: Alpha/beta-gliadin A-II (291 aa).

The first 20 residues, 1-20 (MKTFPILALLAIVATTATTA), serve as a signal peptide directing secretion. Low complexity predominate over residues 32–55 (NPSQQQPQEQVPLVQEQQFQGQQQ). 2 disordered regions span residues 32–120 (NPSQ…QQQQ) and 227–250 (QQYP…GSFQ). Composition is skewed to pro residues over residues 56 to 71 (PFPP…PFPS) and 81 to 104 (FPQP…PQPQ). Low complexity-rich tracts occupy residues 105–120 (PQYS…QQQQ) and 227–237 (QQYPSGQGFFQ). The segment covering 238–250 (PSQQNPQAQGSFQ) has biased composition (polar residues).

Belongs to the gliadin/glutenin family. Post-translationally, substrate of transglutaminase.

Functionally, gliadin is the major seed storage protein in wheat. This Triticum aestivum (Wheat) protein is Alpha/beta-gliadin A-II.